Consider the following 233-residue polypeptide: Probable GTP-binding protein EngB (233 aa).

The EngB-type G domain maps to 31–205; the sequence is TGVEIAFAGR…RRKLDTWFGP (175 aa). GTP-binding positions include 39-46, 66-70, 84-87, 151-154, and 184-186; these read GRSNAGKS, GRTQL, DLPG, TKAD, and FSS. Residues Ser46 and Thr68 each coordinate Mg(2+).

It belongs to the TRAFAC class TrmE-Era-EngA-EngB-Septin-like GTPase superfamily. EngB GTPase family. Mg(2+) serves as cofactor.

Its function is as follows. Necessary for normal cell division and for the maintenance of normal septation. The protein is Probable GTP-binding protein EngB of Photobacterium profundum (strain SS9).